A 382-amino-acid chain; its full sequence is Na(+)/H(+) antiporter NhaA 1 (382 aa).

11 helical membrane passes run 10–30, 45–65, 87–107, 116–136, 145–165, 170–190, 211–231, 252–272, 275–295, 326–346, and 353–373; these read EFSI…NISP, FSFH…IAAA, LLAT…LNAL, GWGI…SLVF, FLLL…ALFY, LPAA…AALL, AGLF…VPFL, LASF…LFGL, AGVT…SLVI, LVGL…GEAF, and GAAK…LAAG.

It belongs to the NhaA Na(+)/H(+) (TC 2.A.33) antiporter family.

It localises to the cell inner membrane. It catalyses the reaction Na(+)(in) + 2 H(+)(out) = Na(+)(out) + 2 H(+)(in). In terms of biological role, na(+)/H(+) antiporter that extrudes sodium in exchange for external protons. The sequence is that of Na(+)/H(+) antiporter NhaA 1 from Pelobacter propionicus (strain DSM 2379 / NBRC 103807 / OttBd1).